The following is a 216-amino-acid chain: Imidazoleglycerol-phosphate dehydratase (216 aa).

Belongs to the imidazoleglycerol-phosphate dehydratase family.

The protein resides in the cytoplasm. It carries out the reaction D-erythro-1-(imidazol-4-yl)glycerol 3-phosphate = 3-(imidazol-4-yl)-2-oxopropyl phosphate + H2O. It functions in the pathway amino-acid biosynthesis; L-histidine biosynthesis; L-histidine from 5-phospho-alpha-D-ribose 1-diphosphate: step 6/9. In Nocardia farcinica (strain IFM 10152), this protein is Imidazoleglycerol-phosphate dehydratase.